A 146-amino-acid polypeptide reads, in one-letter code: Large ribosomal subunit protein uL15 (146 aa).

Positions 1-13 (MKLHELKAAEGSR) are enriched in basic and acidic residues. The disordered stretch occupies residues 1–51 (MKLHELKAAEGSRKVRNRVGRGTSSGNGKTSGRGQKGQKARSGGGVRLGFE). Composition is skewed to gly residues over residues 23–35 (TSSGNGKTSGRGQ) and 42–51 (SGGGVRLGFE).

It belongs to the universal ribosomal protein uL15 family. Part of the 50S ribosomal subunit.

Its function is as follows. Binds to the 23S rRNA. This chain is Large ribosomal subunit protein uL15, found in Streptococcus pyogenes serotype M1.